Consider the following 489-residue polypeptide: Neuropeptide CCHamide-2 receptor (489 aa).

Over 1–74 (MYASLMDVGQ…DRPETYIVTV (74 aa)) the chain is Extracellular. Residues Asn-25 and Asn-50 are each glycosylated (N-linked (GlcNAc...) asparagine). The helical transmembrane segment at 75–95 (LYTLIFIVGVLGNGTLVIIFF) threads the bilayer. At 96 to 107 (RHRSMRNIPNTY) the chain is on the cytoplasmic side. Residues 108 to 128 (ILSLALADLLVILVCVPVATI) form a helical membrane-spanning segment. The Extracellular segment spans residues 129 to 143 (VYTQESWPFERNMCR). A disulfide bridge links Cys-142 with Cys-225. The chain crosses the membrane as a helical span at residues 144–164 (ISEFFKDISIGVSVFTLTALS). Residues 165-184 (GERYCAIVNPLRKLQTKPLT) are Cytoplasmic-facing. The helical transmembrane segment at 185–205 (VFTAVMIWILAILLGMPSVLF) threads the bilayer. The Extracellular portion of the chain corresponds to 206–235 (SDIKSYPVFTATGNMTIEVCSPFRDPEYAK). N-linked (GlcNAc...) asparagine glycosylation is present at Asn-219. Residues 236-256 (FMVAGKALVYYLLPLSIIGAL) traverse the membrane as a helical segment. Over 257 to 293 (YIMMAKRLHMSARNMPGEQQSMQSRTQARARLHVARM) the chain is Cytoplasmic. The chain crosses the membrane as a helical span at residues 294–314 (VVAFVVVFFICFFPYHVFELW). At 315-333 (YHFYPTAEEDFDEFWNVLR) the chain is on the extracellular side. Residues 334–354 (IVGFCTSFLNSCVNPVALYCV) traverse the membrane as a helical segment. Residues 355–489 (SGVFRQHFNR…NRYESGVMRY (135 aa)) are Cytoplasmic-facing. Positions 438 to 468 (SFHRQDSMPLQHGNAHGGGAGGGSSGLGAGG) are disordered. Gly residues predominate over residues 452 to 468 (AHGGGAGGGSSGLGAGG).

It belongs to the G-protein coupled receptor 1 family. In terms of tissue distribution, highly expressed in larval brain. Also highly expressed in adult brain with very low levels in larval and adult gut.

It localises to the cell membrane. Functionally, receptor for the neuropeptide CCHamide-2. This Drosophila melanogaster (Fruit fly) protein is Neuropeptide CCHamide-2 receptor.